A 321-amino-acid chain; its full sequence is Replication factor C small subunit (321 aa).

Residue G43 to T50 participates in ATP binding.

It belongs to the activator 1 small subunits family. RfcS subfamily. In terms of assembly, heteromultimer composed of small subunits (RfcS) and large subunits (RfcL).

Functionally, part of the RFC clamp loader complex which loads the PCNA sliding clamp onto DNA. In Methanosphaera stadtmanae (strain ATCC 43021 / DSM 3091 / JCM 11832 / MCB-3), this protein is Replication factor C small subunit.